Consider the following 656-residue polypeptide: Very long-chain specific acyl-CoA dehydrogenase, mitochondrial (656 aa).

The interval 1–33 is disordered; sequence MQSARMTPSVGRQLLRLGARSSRSTTVLQGQPR. The N-terminal 41 residues, 1–41, are a transit peptide targeting the mitochondrion; the sequence is MQSARMTPSVGRQLLRLGARSSRSTTVLQGQPRPISAQRLY. The segment at 42–483 is catalytic; sequence AREATQAVLD…ALQGCMDKGK (442 aa). K52 is subject to N6-acetyllysine. K72 and K128 each carry N6-acetyllysine; alternate. An N6-succinyllysine; alternate mark is found at K72 and K128. The residue at position 196 (K196) is an N6-succinyllysine. Residue 215 to 224 participates in FAD binding; that stretch reads FCLTEPSSGS. C238 is modified (S-nitrosocysteine). K240 bears the N6-acetyllysine; alternate mark. At K240 the chain carries N6-succinyllysine; alternate. 250–252 serves as a coordination point for FAD; sequence WIS. K269 bears the N6-succinyllysine mark. Residues K277 and K279 each carry the N6-acetyllysine; alternate modification. K277 and K279 each carry N6-succinyllysine; alternate. 2 positions are modified to N6-acetyllysine: K299 and K317. Position 332 is an N6-acetyllysine; alternate (K332). K332 is modified (N6-succinyllysine; alternate). Residue K373 is modified to N6-succinyllysine. 462-464 is a substrate binding site; that stretch reads FEG. Residue E463 is the Proton acceptor of the active site. 465-467 is a binding site for FAD; that stretch reads AND. K483 carries the N6-acetyllysine; alternate modification. At K483 the chain carries N6-succinyllysine; alternate. The interval 484–517 is membrane-anchoring; that stretch reads ELTGLGNALKNPFGNVGLLMGEAGKQLRRRTGIG. Residues S518 and S523 each carry the phosphoserine modification. K551 is subject to N6-acetyllysine. K557 bears the N6-acetyllysine; alternate mark. Position 557 is an N6-succinyllysine; alternate (K557). Q563 contacts FAD. K640 bears the N6-succinyllysine mark.

Belongs to the acyl-CoA dehydrogenase family. As to quaternary structure, homodimer. Homodimerizes after import into the mitochondrion. FAD serves as cofactor. S-nitrosylation at Cys-238 in liver improves catalytic efficiency.

It is found in the mitochondrion inner membrane. The enzyme catalyses a very-long-chain 2,3-saturated fatty acyl-CoA + oxidized [electron-transfer flavoprotein] + H(+) = a very-long-chain (2E)-enoyl-CoA + reduced [electron-transfer flavoprotein]. It catalyses the reaction dodecanoyl-CoA + oxidized [electron-transfer flavoprotein] + H(+) = (2E)-dodecenoyl-CoA + reduced [electron-transfer flavoprotein]. The catalysed reaction is tetradecanoyl-CoA + oxidized [electron-transfer flavoprotein] + H(+) = (2E)-tetradecenoyl-CoA + reduced [electron-transfer flavoprotein]. It carries out the reaction oxidized [electron-transfer flavoprotein] + hexadecanoyl-CoA + H(+) = (2E)-hexadecenoyl-CoA + reduced [electron-transfer flavoprotein]. The enzyme catalyses octadecanoyl-CoA + oxidized [electron-transfer flavoprotein] + H(+) = (2E)-octadecenoyl-CoA + reduced [electron-transfer flavoprotein]. It catalyses the reaction eicosanoyl-CoA + oxidized [electron-transfer flavoprotein] + H(+) = (2E)-eicosenoyl-CoA + reduced [electron-transfer flavoprotein]. The catalysed reaction is docosanoyl-CoA + oxidized [electron-transfer flavoprotein] + H(+) = (2E)-docosenoyl-CoA + reduced [electron-transfer flavoprotein]. It carries out the reaction tetracosanoyl-CoA + oxidized [electron-transfer flavoprotein] + H(+) = (2E)-tetracosenoyl-CoA + reduced [electron-transfer flavoprotein]. It participates in lipid metabolism; mitochondrial fatty acid beta-oxidation. In terms of biological role, very long-chain specific acyl-CoA dehydrogenase is one of the acyl-CoA dehydrogenases that catalyze the first step of mitochondrial fatty acid beta-oxidation, an aerobic process breaking down fatty acids into acetyl-CoA and allowing the production of energy from fats. The first step of fatty acid beta-oxidation consists in the removal of one hydrogen from C-2 and C-3 of the straight-chain fatty acyl-CoA thioester, resulting in the formation of trans-2-enoyl-CoA. Among the different mitochondrial acyl-CoA dehydrogenases, very long-chain specific acyl-CoA dehydrogenase acts specifically on acyl-CoAs with saturated 12 to 24 carbons long primary chains. The protein is Very long-chain specific acyl-CoA dehydrogenase, mitochondrial of Mus musculus (Mouse).